The chain runs to 854 residues: ATP-dependent zinc metalloprotease FtsH (854 aa).

The Cytoplasmic segment spans residues 1–5 (MNRKT). The helical transmembrane segment at 6–26 (VFRNVLLVAVVLLVIYAFSYF) threads the bilayer. Residues 27–112 (SNDTRDFKTV…FNTTVTQESW (86 aa)) lie on the Extracellular side of the membrane. A helical transmembrane segment spans residues 113–133 (LTSILLFVLPMIILFGIFFFV). The Cytoplasmic segment spans residues 134–854 (MNRMQGGGGR…ARWDGPDGSR (721 aa)). 207–214 (GPPGTGKT) is a binding site for ATP. Residue histidine 429 coordinates Zn(2+). The active site involves glutamate 430. The Zn(2+) site is built by histidine 433 and aspartate 505. The segment at 658 to 854 (AGAPNSGVPN…ARWDGPDGSR (197 aa)) is disordered. 2 stretches are compositionally biased toward low complexity: residues 661 to 692 (PNSG…AQPS) and 698 to 719 (APQQ…WSAP). Residues 720–730 (GWPPRENPSPT) show a composition bias toward pro residues. Residues 749-778 (NQSQGQYGQPQHGQPQPDQGQYGQPHPGQQ) show a composition bias toward low complexity. A compositionally biased stretch (polar residues) spans 812–822 (GNPSGENQWQS). Residues 825–834 (PEQPQTPPPH) show a composition bias toward pro residues.

In the central section; belongs to the AAA ATPase family. The protein in the C-terminal section; belongs to the peptidase M41 family. In terms of assembly, homohexamer. The cofactor is Zn(2+).

The protein localises to the cell membrane. Acts as a processive, ATP-dependent zinc metallopeptidase for both cytoplasmic and membrane proteins. Plays a role in the quality control of integral membrane proteins. In Rhodococcus erythropolis (strain PR4 / NBRC 100887), this protein is ATP-dependent zinc metalloprotease FtsH.